A 349-amino-acid chain; its full sequence is N-acetyl-gamma-glutamyl-phosphate reductase (349 aa).

The active site involves Cys-149.

The protein belongs to the NAGSA dehydrogenase family. Type 1 subfamily.

The protein resides in the cytoplasm. It carries out the reaction N-acetyl-L-glutamate 5-semialdehyde + phosphate + NADP(+) = N-acetyl-L-glutamyl 5-phosphate + NADPH + H(+). It functions in the pathway amino-acid biosynthesis; L-arginine biosynthesis; N(2)-acetyl-L-ornithine from L-glutamate: step 3/4. Catalyzes the NADPH-dependent reduction of N-acetyl-5-glutamyl phosphate to yield N-acetyl-L-glutamate 5-semialdehyde. This chain is N-acetyl-gamma-glutamyl-phosphate reductase, found in Acinetobacter baylyi (strain ATCC 33305 / BD413 / ADP1).